Reading from the N-terminus, the 349-residue chain is PDZ and LIM domain protein 2 (349 aa).

The PDZ domain occupies 1–84 (MALTVDVAGP…PLRLQLDRSQ (84 aa)). The tract at residues 74-147 (SPLRLQLDRS…TPPPTSPVAL (74 aa)) is disordered. Positions 81–94 (DRSQTASPGQTNGE) are enriched in polar residues. Phosphoserine occurs at positions 124, 127, 129, 134, and 137. Phosphothreonine occurs at positions 138 and 142. Serine 143 and serine 163 each carry phosphoserine. The interval 169 to 212 (AHHLTYPGHPTSQQAGHSSPSDSAVRVLLHSPGRPSSPRFSSLD) is disordered. The span at 178-190 (PTSQQAGHSSPSD) shows a compositional bias: polar residues. Phosphoserine occurs at positions 199, 204, 205, 209, 210, and 263. The span at 199 to 210 (SPGRPSSPRFSS) shows a compositional bias: low complexity. An LIM zinc-binding domain is found at 281–341 (HTCEKCSVNI…EKHARQRYSM (61 aa)).

Interacts with alpha-actinins ACTN1 and ACTN4, FLNA and MYH9. Interacts (via LIM zinc-binding domain) with MKRN2. In terms of tissue distribution, highly expressed in lung. Expressed at intermediate level in kidney, testis and spleen. Weakly expressed in heart and brain.

Its subcellular location is the cytoplasm. The protein resides in the cytoskeleton. Probable adapter protein located at the actin cytoskeleton that promotes cell attachment. Necessary for the migratory capacity of epithelial cells. Overexpression enhances cell adhesion to collagen and fibronectin and suppresses anchorage independent growth. May contribute to tumor cell migratory capacity. The polypeptide is PDZ and LIM domain protein 2 (Pdlim2) (Mus musculus (Mouse)).